The following is a 651-amino-acid chain: Acetyl-coenzyme A synthetase (651 aa).

Residues 189–192 (RGGK), Thr311, and Asn335 contribute to the CoA site. ATP-binding positions include 387 to 389 (GEP), 411 to 416 (DTWWQT), Asp500, and Arg515. Ser523 is a binding site for CoA. An ATP-binding site is contributed by Arg526. Mg(2+) is bound by residues Val537, His539, and Val542. Arg584 is a binding site for CoA. Position 609 is an N6-acetyllysine (Lys609).

Belongs to the ATP-dependent AMP-binding enzyme family. Mg(2+) serves as cofactor. In terms of processing, acetylated. Deacetylation by the SIR2-homolog deacetylase activates the enzyme.

The catalysed reaction is acetate + ATP + CoA = acetyl-CoA + AMP + diphosphate. Functionally, catalyzes the conversion of acetate into acetyl-CoA (AcCoA), an essential intermediate at the junction of anabolic and catabolic pathways. AcsA undergoes a two-step reaction. In the first half reaction, AcsA combines acetate with ATP to form acetyl-adenylate (AcAMP) intermediate. In the second half reaction, it can then transfer the acetyl group from AcAMP to the sulfhydryl group of CoA, forming the product AcCoA. In Rhizobium etli (strain CIAT 652), this protein is Acetyl-coenzyme A synthetase.